Here is a 426-residue protein sequence, read N- to C-terminus: Serine/threonine-protein kinase ssn3 (426 aa).

Residues 41–368 form the Protein kinase domain; it reads YHIVGFISSG…AREALEHPYF (328 aa). Residues 47 to 55 and Lys71 contribute to the ATP site; that span reads ISSGTYGRV. Catalysis depends on Asp173, which acts as the Proton acceptor. Residues 390–426 are disordered; sequence RVTQDDNDIRSGSLPGTKRSGLPDDSLMGRAAKRLKE.

Belongs to the protein kinase superfamily. CMGC Ser/Thr protein kinase family. CDC2/CDKX subfamily. In terms of assembly, component of the srb8-11 complex, a regulatory module of the Mediator complex. Mg(2+) serves as cofactor.

The protein resides in the nucleus. The enzyme catalyses L-seryl-[protein] + ATP = O-phospho-L-seryl-[protein] + ADP + H(+). It catalyses the reaction L-threonyl-[protein] + ATP = O-phospho-L-threonyl-[protein] + ADP + H(+). It carries out the reaction [DNA-directed RNA polymerase] + ATP = phospho-[DNA-directed RNA polymerase] + ADP + H(+). Functionally, component of the srb8-11 complex. The srb8-11 complex is a regulatory module of the Mediator complex which is itself dependent transcription. The srb8-11 complex may be involved in the transcriptional repression of a subset of genes regulated by Mediator. It may inhibit the association of the Mediator complex with RNA polymerase II to form the holoenzyme complex. The srb8-11 complex phosphorylates the C-terminal domain (CTD) of the largest subunit of RNA polymerase II. In Neosartorya fischeri (strain ATCC 1020 / DSM 3700 / CBS 544.65 / FGSC A1164 / JCM 1740 / NRRL 181 / WB 181) (Aspergillus fischerianus), this protein is Serine/threonine-protein kinase ssn3 (ssn3).